The chain runs to 2452 residues: MTPLDAPGAPAPIAVVGMGCRFGGGATDPQKLWKLLEEGGSAWSKIPPSRFNVGGVYHPNGQRVGSCMDPQYRLILEVVYEALEAGMYYIPWFHTWVLTLHGSAAGIPLEQVSGSKTGVFAGTMYHDYQGSFQRQPEALPRYFITGNAGTMLANRVSHFYDLRGPSVSIDTACSTTLTALHLAIQSLRAGESDMAIVAGANLLLNPDVFTTMSNLGFLSPDGISYSFDSRADGYGRGEGVAAIVLKTLPHAVRDGDPIRLIVRETAINQDGRTLAISTPSGEAQERLIRDCYQKARLDPKQTSYVEAHGTGTGAGDPLELGVISAAFPRQQIQVGSVKANIGHTEAIPLSSQSWIPTDGVCRASINNFGFGGANAHAIVERYAPFAETSMCSPNGYPGNYDGHVETDQAHIYVLSAKDENSCMRMVSRLCDYATHAREADDWQLLANMAYTLGSRRSNFRWKAVCTAHNLTSLAQNLAGDGMRPSKSAEQVRLGWVFTGQGAQWFAMGQELSRPETESRVDQAEFSLPLSTALQIALVRLLWSWNIQPVAVTSHSSGEAAAAYAIGALTARSAIGISYIRGALTARDRLASVHKGAMLAVGLSRSEVGIYIRQVPLQSEECLVVGCINSPSSVTVSGDLSAIAKLEELLHADRIFARRLKVTQAFHSSHMNSMTDAFRAGLTELFGADPSDAANANKDVIYASPRTGDRMHDFNSLRDPMHWVECMLYPVEFESAFRQMCLDENDHMPKVDRIIEIGPHGALGGPIKQIMQLPELAPCDIPYLSCLSRGKSSLSTLRLLASELIRAGFPVDLNAINFPRGCEAARVQVLSDLPPYPWNHETRYWKEPRISQSARQRKGPVHDLIGLQEPLNLPLARSWHNVLRVSDLPWLRDHVVGSHIVFPGAGFVCMAVIGISTLCSSDHESADFSYILRDVNFAQALILPADGEEGIDLRLTICAPDQSLGSQDWQRFLVHSITADKNDWTEHCTGLVRVDMDQPASSLSNPQRADPRPWSRKTAPQDLWDSLHRVGIRHGPLFQNITRIESDGRESWCTFAIADTASAMPHAYESQHIVHPTTLDSAIQAAYTTLPFAGSRIKSAMVPARVGCMKISSRLADLEARDMLRAQAKMHSQSHCALVTDVAVFDEADPFGGPVMELEGLVFQSLGASLGTSGRDSTDTGNTCSSWHWAPDISLVNPVWLERTLDTGIQKHEIGVILELRRCSVHFIQEAMESLSVGDVARLSGHLAKFYAWMQAQLACAQNGELGPESSSWTRDNEHARCSLRSRVVAGSTNGEMICRLGSVLPAILRREVDPLEVMMDGHLLSRYYVDALKWSRSNAQASELVRLCCHKNPRARILEIGGGTGGCTQLVVDSLGPNPPVGRYDFTDVSAGFFEAARKRFAGWQDVMDFRKLDIEDDPEAQGFVCGSYDVVLACQVLHATSNMQRTLTNVRKLLKPGGKLILVETTRDELDLFFTFGLLPGWWLSEEPERQSTPSLSPTMWRSMLHATGFNGVEVEARDCDSDEFYMISTMMSTAVQATPTSCSDKLPEVLLVYVDSSTPMSWISDLQGAIRCRNCSVTSLQALRQVPPTEGQMCVFLGEMEHSMLGSVTNDDFTLLTSMLQLAGGALWVTRGATMKSDDPLKALHLGLLRTMRNESHGKRFVSLDLDPSRNPWTGDSRDAIVSVLDLVSMSDEKEFDYAERGGVIHVPRAFSDSINGGEEDGYALEPFQDSQHLLRLDIRTPGLLDSLYFRKRSVDPYEPDKLPDDWVEIEPRAFGLNFRDIMVAMGQLESNVMGFECAGVVTSLSETARTIAPGLAVGDRVCALMNGHWASRVTTSRTNVVRIPETLSFPHAASIPLAFTTAYISLYTVARILPGETVLIHAGAGGVGQAAIILAQLTGAEVFTTAGSEAKRNHLIDKFHLDPDHVFSSRDSSFVDGIKTRTSGKGVDVVLNSLAGPLLQKSFDCLARFGRFVEIGKKDLEQNSRLDMSTFVRNVSFSSVDILYWQQAKSAEIFQALSEVILLWGRTAIGLIHPISEYPMSALEKAFRTMQSGQHVGKIVVTVAPDDAVLVRQERMPLFLKPNVSYLVAGGLGGIGRRICEWLVDRGARYLIILSRTARVDPVVTSLQERGCTVSVQACDVADKSQLEAALQQCRAENLPPIRGVIQGAMVLKDALVSQMTADGFHAALRPKVQGSWNLHRIASDVDFFVMLSSLVGVMGGAGQANYAAAGAFQDALAEHRMAHNQPAVTIDLGMVQSIGYVAETDSAVAERLQRIGYQPLHEEEVLAVLEQAMSPVCSPTAPTRPAVIVTGINTRPGPHWAHADWMQEARFAGIKYRDPLRDNNGALPLTLAEDDNLHARLNRATSQQASIAVIMEAMGRKLISMFGLTDSEMSATQTLAGIGVDSLVAIELRNWITARFNVDISVFELMEGRTIAKVAEVVLQRYKP.

The Ketosynthase family 3 (KS3) domain occupies Pro10–Arg381. Active-site for beta-ketoacyl synthase activity residues include Cys173, His308, and His343. The tract at residues Val496–Lys790 is malonyl-CoA:ACP transacylase (MAT) domain. The active-site For malonyltransferase activity is Ser555. The tract at residues His861–Pro998 is N-terminal hotdog fold. The tract at residues His861–Gly1166 is dehydratase (DH) domain. Positions His861–Thr1171 constitute a PKS/mFAS DH domain. His893 (proton acceptor; for dehydratase activity) is an active-site residue. The interval Gln997–Thr1017 is disordered. Residues Pro1012 to Thr1171 form a C-terminal hotdog fold region. Asp1079 serves as the catalytic Proton donor; for dehydratase activity. Residues Glu1343–Met1528 form a methyltransferase (CMet) domain region. The segment at Gly1745–Val2064 is enoylreductase (ER) domain. Positions Ser2088–Gln2260 are ketoreductase (KR) domain. The Carrier domain occupies Ala2373–Tyr2450. The residue at position 2410 (Ser2410) is an O-(pantetheine 4'-phosphoryl)serine.

As to quaternary structure, interacts with LovD. Requires pantetheine 4'-phosphate as cofactor.

The catalysed reaction is holo-[2-methylbutanoate polyketide synthase] + 2 malonyl-CoA + S-adenosyl-L-methionine + 2 NADPH + 3 H(+) = (S)-2-methylbutanoyl-[2-methylbutanoate polyketide synthase] + S-adenosyl-L-homocysteine + 2 CO2 + 2 NADP(+) + 2 CoA + H2O. It functions in the pathway polyketide biosynthesis; lovastatin biosynthesis. Its function is as follows. Lovastatin diketide synthase; part of the gene cluster that mediates the biosynthesis of lovastatin (also known as mevinolin, mevacor or monacolin K), a hypolipidemic inhibitor of (3S)-hydroxymethylglutaryl-coenzyme A (HMG-CoA) reductase (HMGR). The first step in the biosynthesis of lovastatin is the production of dihydromonacolin L acid by the lovastatin nonaketide synthase lovB and the trans-acting enoyl reductase lovC via condensation of one acetyl-CoA unit and 8 malonyl-CoA units. Dihydromonacolin L acid is released from lovB by the thioesterase lovG. Next, dihydromonacolin L acid is oxidized by the dihydromonacolin L monooxygenase lovA twice to form monacolin J acid. The 2-methylbutyrate moiety of lovastatin is synthesized by the lovastatin diketide synthase lovF via condensation of one acetyl-CoA unit and one malonyl-CoA unit. Finally, the covalent attachment of this moiety to monacolin J acid is catalyzed by the transesterase lovD to yield lovastatin. LovD has broad substrate specificity and can also convert monacolin J to simvastatin using alpha-dimethylbutanoyl-S-methyl-3-mercaptopropionate (DMB-S-MMP) as the thioester acyl donor, and can also catalyze the reverse reaction and function as hydrolase in vitro. LovD has much higher activity with LovF-bound 2-methylbutanoate than with free diketide substrates. In Aspergillus terreus (strain NIH 2624 / FGSC A1156), this protein is Lovastatin diketide synthase lovF.